The primary structure comprises 235 residues: Purine nucleoside phosphorylase DeoD-type (235 aa).

His-4 lines the a purine D-ribonucleoside pocket. Phosphate is bound by residues Gly-20, Arg-24, Arg-43, and 87-90 (RVGT). Residues Glu-162, 179–181 (EME), and 203–204 (SD) each bind a purine D-ribonucleoside. Residue Asp-204 is the Proton donor of the active site.

This sequence belongs to the PNP/UDP phosphorylase family. Homohexamer; trimer of homodimers.

It carries out the reaction a purine D-ribonucleoside + phosphate = a purine nucleobase + alpha-D-ribose 1-phosphate. The catalysed reaction is a purine 2'-deoxy-D-ribonucleoside + phosphate = a purine nucleobase + 2-deoxy-alpha-D-ribose 1-phosphate. Its function is as follows. Catalyzes the reversible phosphorolytic breakdown of the N-glycosidic bond in the beta-(deoxy)ribonucleoside molecules, with the formation of the corresponding free purine bases and pentose-1-phosphate. This chain is Purine nucleoside phosphorylase DeoD-type, found in Bacillus anthracis (strain CDC 684 / NRRL 3495).